Here is a 462-residue protein sequence, read N- to C-terminus: Arginine biosynthesis bifunctional protein ArgJ, mitochondrial (462 aa).

Residues Thr200, Lys228, Thr239, Glu326, Asn457, and Thr462 each contribute to the substrate site. Residue Thr239 is the Nucleophile of the active site.

Belongs to the ArgJ family. Heterodimer of an alpha and a beta chain. The alpha and beta chains are autoproteolytically processed from a single precursor protein within the mitochondrion.

It is found in the mitochondrion matrix. It catalyses the reaction N(2)-acetyl-L-ornithine + L-glutamate = N-acetyl-L-glutamate + L-ornithine. The catalysed reaction is L-glutamate + acetyl-CoA = N-acetyl-L-glutamate + CoA + H(+). It functions in the pathway amino-acid biosynthesis; L-arginine biosynthesis; L-ornithine and N-acetyl-L-glutamate from L-glutamate and N(2)-acetyl-L-ornithine (cyclic): step 1/1. It participates in amino-acid biosynthesis; L-arginine biosynthesis; N(2)-acetyl-L-ornithine from L-glutamate: step 1/4. Catalyzes two activities which are involved in the cyclic version of arginine biosynthesis: the synthesis of acetylglutamate from glutamate and acetyl-CoA, and of ornithine by transacetylation between acetylornithine and glutamate. The sequence is that of Arginine biosynthesis bifunctional protein ArgJ, mitochondrial from Pyrenophora tritici-repentis (strain Pt-1C-BFP) (Wheat tan spot fungus).